Reading from the N-terminus, the 1709-residue chain is Sialoadhesin (1709 aa).

The N-terminal stretch at 1-19 (MGFLPKLLLLASFFPAGQA) is a signal peptide. An Ig-like V-type domain is found at 20-136 (SWGVSSPQDV…DVKGTLVTVT (117 aa)). The Extracellular segment spans residues 20 to 1641 (SWGVSSPQDV…ALHRLHQFQQ (1622 aa)). Disulfide bonds link cysteine 36/cysteine 166, cysteine 41/cysteine 98, cysteine 160/cysteine 217, and cysteine 262/cysteine 305. Residues tyrosine 63, arginine 116, and 122–126 (VNRWS) contribute to the N-acetylneuraminate site. 12 consecutive Ig-like C2-type domains span residues 139 to 233 (PRVP…IHLQ), 238 to 320 (PKGV…PPIS), 326 to 405 (AEVQ…GPVS), 411 to 507 (PPLT…LDFH), 511 to 593 (ARLL…AVLT), 601 to 705 (PTFT…ATFN), 708 to 785 (ATVL…AQLS), 799 to 894 (PKLS…FQVR), 898 to 977 (VQVS…APIS), 984 to 1083 (PRHV…ADFD), 1085 to 1165 (QAVN…RPIT), and 1176 to 1248 (RLTY…SPLG). The N-linked (GlcNAc...) asparagine glycan is linked to asparagine 159. N-linked (GlcNAc...) asparagine glycosylation is found at asparagine 265 and asparagine 339. Intrachain disulfides connect cysteine 346-cysteine 390 and cysteine 433-cysteine 491. N-linked (GlcNAc...) asparagine glycosylation is present at asparagine 499. 2 disulfides stabilise this stretch: cysteine 531–cysteine 575 and cysteine 624–cysteine 689. N-linked (GlcNAc...) asparagine glycosylation is found at asparagine 697, asparagine 726, asparagine 730, and asparagine 741. 2 disulfides stabilise this stretch: cysteine 729/cysteine 774 and cysteine 817/cysteine 876. Asparagine 886 carries N-linked (GlcNAc...) asparagine glycosylation. Cystine bridges form between cysteine 916-cysteine 960 and cysteine 1005-cysteine 1067. 2 N-linked (GlcNAc...) asparagine glycosylation sites follow: asparagine 1104 and asparagine 1138. Disulfide bonds link cysteine 1107/cysteine 1149 and cysteine 1193/cysteine 1241. Asparagine 1251 carries an N-linked (GlcNAc...) asparagine glycan. Ig-like C2-type domains lie at 1259-1341 (EGVR…AALQ), 1350-1442 (VLSS…RLQV), 1445-1528 (ARVV…VMLR), and 1536-1631 (PTMM…FGVR). Cystine bridges form between cysteine 1281–cysteine 1324 and cysteine 1367–cysteine 1425. 2 N-linked (GlcNAc...) asparagine glycosylation sites follow: asparagine 1462 and asparagine 1476. 2 disulfides stabilise this stretch: cysteine 1465–cysteine 1511 and cysteine 1554–cysteine 1613. Residues 1642-1662 (LLWVLGLLVGLLLLLLGLGAC) form a helical membrane-spanning segment. At 1663–1709 (YTWRRRRVCKQSMGENSVEMAFQKETTQLIDPDAATCETSTCAPPLG) the chain is on the cytoplasmic side.

It belongs to the immunoglobulin superfamily. SIGLEC (sialic acid binding Ig-like lectin) family. Interacts with TYROBP. Interacts with CLEC10A. In terms of tissue distribution, expressed by macrophages in various tissues. High levels are found in spleen, lymph node, perivascular macrophages in brain and lower levels in bone marrow, liver Kupffer cells and lamina propria of colon and lung. Also expressed by inflammatory macrophages in rheumatoid arthritis.

The protein resides in the cell membrane. It is found in the secreted. Its function is as follows. Macrophage-restricted adhesion molecule that mediates sialic-acid dependent binding to lymphocytes, including granulocytes, monocytes, natural killer cells, B-cells and CD8 T-cells. Plays a crucial role in limiting bacterial dissemination by engaging sialylated bacteria to promote effective phagocytosis and antigen presentation for the adaptive immune response. Mediates the uptake of various enveloped viruses via sialic acid recognition and subsequently induces the formation of intracellular compartments filled with virions (VCCs). In turn, enhances macrophage-to-T-cell transmission of several viruses including HIV-1 or SARS-CoV-2. Acts as an endocytic receptor mediating clathrin dependent endocytosis. Preferentially binds to alpha-2,3-linked sialic acid. Binds to SPN/CD43 on T-cells. May play a role in hemopoiesis. Plays a role in the inhibition of antiviral innate immune by promoting TBK1 degradation via TYROBP and TRIM27-mediated ubiquitination. (Microbial infection) Facilitates viral cytoplasmic entry into activated dendritic cells via recognition of sialylated gangliosides pesent on viral membrane. This chain is Sialoadhesin (SIGLEC1), found in Homo sapiens (Human).